An 87-amino-acid polypeptide reads, in one-letter code: Non-structural protein NS3 (87 aa).

It localises to the host nucleus. In terms of biological role, plays a role in viral DNA replication. This Mustela (ADV) protein is Non-structural protein NS3.